The following is a 250-amino-acid chain: DNA repair protein RecO (250 aa).

It belongs to the RecO family.

Functionally, involved in DNA repair and RecF pathway recombination. This Thermodesulfovibrio yellowstonii (strain ATCC 51303 / DSM 11347 / YP87) protein is DNA repair protein RecO.